We begin with the raw amino-acid sequence, 515 residues long: Maturase K (515 aa).

Belongs to the intron maturase 2 family. MatK subfamily.

The protein localises to the plastid. It is found in the chloroplast. Functionally, usually encoded in the trnK tRNA gene intron. Probably assists in splicing its own and other chloroplast group II introns. This chain is Maturase K, found in Zingiber officinale (Ginger).